A 695-amino-acid chain; its full sequence is NAD(P)H-quinone oxidoreductase subunit 5, chloroplastic (695 aa).

Transmembrane regions (helical) follow at residues Trp1–Phe21, Trp32–Ile52, Ile81–Ile101, Phe117–Ile137, Ile139–Thr159, Gly177–Phe197, Asn211–Ala231, Thr250–Ala270, Val278–Ala298, Leu319–Ile339, Ala346–Ser366, Ile388–Ser408, Trp417–Tyr437, Leu535–Phe555, and Val594–Ile614.

Belongs to the complex I subunit 5 family. NDH is composed of at least 16 different subunits, 5 of which are encoded in the nucleus.

Its subcellular location is the plastid. It is found in the chloroplast thylakoid membrane. The catalysed reaction is a plastoquinone + NADH + (n+1) H(+)(in) = a plastoquinol + NAD(+) + n H(+)(out). It catalyses the reaction a plastoquinone + NADPH + (n+1) H(+)(in) = a plastoquinol + NADP(+) + n H(+)(out). In terms of biological role, NDH shuttles electrons from NAD(P)H:plastoquinone, via FMN and iron-sulfur (Fe-S) centers, to quinones in the photosynthetic chain and possibly in a chloroplast respiratory chain. The immediate electron acceptor for the enzyme in this species is believed to be plastoquinone. Couples the redox reaction to proton translocation, and thus conserves the redox energy in a proton gradient. This is NAD(P)H-quinone oxidoreductase subunit 5, chloroplastic (ndhF) from Capsicum baccatum (Peruvian pepper).